We begin with the raw amino-acid sequence, 290 residues long: Light-independent protochlorophyllide reductase iron-sulfur ATP-binding protein (290 aa).

ATP contacts are provided by residues 10-15 (GIGKST) and lysine 39. Serine 14 is a Mg(2+) binding site. [4Fe-4S] cluster is bound by residues cysteine 95 and cysteine 129. Residue 180–181 (NR) participates in ATP binding.

Belongs to the NifH/BchL/ChlL family. As to quaternary structure, homodimer. Protochlorophyllide reductase is composed of three subunits; ChlL, ChlN and ChlB. It depends on [4Fe-4S] cluster as a cofactor.

It localises to the plastid. The protein localises to the chloroplast. The enzyme catalyses chlorophyllide a + oxidized 2[4Fe-4S]-[ferredoxin] + 2 ADP + 2 phosphate = protochlorophyllide a + reduced 2[4Fe-4S]-[ferredoxin] + 2 ATP + 2 H2O. The protein operates within porphyrin-containing compound metabolism; chlorophyll biosynthesis (light-independent). Its function is as follows. Component of the dark-operative protochlorophyllide reductase (DPOR) that uses Mg-ATP and reduced ferredoxin to reduce ring D of protochlorophyllide (Pchlide) to form chlorophyllide a (Chlide). This reaction is light-independent. The L component serves as a unique electron donor to the NB-component of the complex, and binds Mg-ATP. This Porphyra purpurea (Red seaweed) protein is Light-independent protochlorophyllide reductase iron-sulfur ATP-binding protein.